The chain runs to 158 residues: Botcinic acid biosynthesis cluster B protein 16 (158 aa).

It functions in the pathway polyketide biosynthesis. In terms of biological role, part of the gene cluster B that mediates the biosynthesis of botcinic acid and its botcinin derivatives, acetate-derived polyketides that contribute to virulence when combined with the sesquiterpene botrydial. Botcinic acid and its derivatives have been shown to induce chlorosis and necrosis during host plant infection, but also have antifungal activities. Two polyketide synthases, BOA6 and BOA9, are involved in the biosynthesis of botcinins. BOA6 mediates the formation of the per-methylated tetraketide core by condensation of four units of malonyl-CoA with one unit of acetyl-CoA, which would be methylated in activated methylene groups to yield a bicyclic acid intermediate that could then either be converted to botrylactone derivatives or lose the starter acetate unit through a retro-Claisen type C-C bond cleavage to yield botcinin derivatives. The second polyketide synthase, BOA9, is probably required for the biosynthesis of the tetraketide side chain of botcinins. The methyltransferase (MT) domain within BOA6 is probably responsible for the incorporation of four methyl groups. The trans-enoyl reductase BOA5 might take over the enoyl reductase function of BOA6 that misses an ER domain. The monooxygenases BOA2, BOA3 and BOA4 might be involved in further hydroxylations at C4, C5 and C8, whereas BOA7, close to BOA9, could potentially be involved in the hydroxylation at C4 in the side chain of botcinins. The chain is Botcinic acid biosynthesis cluster B protein 16 from Botryotinia fuckeliana (strain B05.10) (Noble rot fungus).